A 504-amino-acid polypeptide reads, in one-letter code: MTEQKYIVALDQGTTSSRAVILDHDANIVSVSQREFTQIYPQAGWVEHDPLEIYATQSSTLVETLAKAGIRSDQIAAIGITNQRETTIVWNKETGKPVYNAIVWQCRRTADTCEKLKEAGLEEYIRENTGLVVDPYFSGTKIKWILDNVEGAREDAEAGKLLFGTVDTWLVWKMTQGRVHVTDYTNASRTMVFNINTLQWDEKLLKELDIPLSMMPEVKSSSEVYGETNIGGKGGTRIPIAGIAGDQQAALYGQMCVEQGQAKNTYGTGCFLLMNTGKEKVTSRNGLLTTLACGPRGEASYALEGAVFMGGASIQWLRDEMKLLADAKDSEYFATKVDSSNGVYVVPAFTGLGAPYWDAYARGTIVGLTRGCGSNHIIRATLESIAYQTRDVIDAMQADSGIKLSALRVDGGAVANNFLMQFQADVLDVAVHRPQVTEVTALGAAYLAGLAVGFWGGLDELAGKAVIDRSFEPHHDEIKRNQRYRGWKRAVKCAQSWAELHDEE.

T14 contacts ADP. T14, T15, and S16 together coordinate ATP. Residue T14 participates in sn-glycerol 3-phosphate binding. R18 contacts ADP. R84, E85, Y136, and D246 together coordinate sn-glycerol 3-phosphate. Residues R84, E85, Y136, D246, and Q247 each coordinate glycerol. T268 and G311 together coordinate ADP. Residues T268, G311, Q315, and G412 each contribute to the ATP site. G412 and N416 together coordinate ADP.

Belongs to the FGGY kinase family.

It carries out the reaction glycerol + ATP = sn-glycerol 3-phosphate + ADP + H(+). The protein operates within polyol metabolism; glycerol degradation via glycerol kinase pathway; sn-glycerol 3-phosphate from glycerol: step 1/1. Its activity is regulated as follows. Inhibited by fructose 1,6-bisphosphate (FBP). Functionally, key enzyme in the regulation of glycerol uptake and metabolism. Catalyzes the phosphorylation of glycerol to yield sn-glycerol 3-phosphate. The chain is Glycerol kinase from Aliivibrio salmonicida (strain LFI1238) (Vibrio salmonicida (strain LFI1238)).